A 187-amino-acid chain; its full sequence is Ribosome-recycling factor (187 aa).

The protein belongs to the RRF family.

The protein resides in the cytoplasm. Responsible for the release of ribosomes from messenger RNA at the termination of protein biosynthesis. May increase the efficiency of translation by recycling ribosomes from one round of translation to another. In Xanthobacter autotrophicus (strain ATCC BAA-1158 / Py2), this protein is Ribosome-recycling factor.